The primary structure comprises 91 residues: Potassium channel toxin TtrKIK (91 aa).

The first 25 residues, 1 to 25 (MVATNRCCVFALLFALLLVHSLTEA), serve as a signal peptide directing secretion. The propeptide occupies 26–44 (GKGKEVLGKIKDKLIEAKD). Positions 58–91 (EYACPAIEKFCEDHCAAKKAVGKCDDFKCNCIKL) constitute a BetaSPN-type CS-alpha/beta domain. Disulfide bonds link Cys-61–Cys-81, Cys-68–Cys-86, and Cys-72–Cys-88.

It belongs to the long chain scorpion toxin family. Class 2 subfamily. Expressed by the venom gland.

It is found in the secreted. Functionally, the full peptide presents antibacterial and cytotoxic activities. The synthetic C-terminus (AA 33-76) inhibits voltage-gated potassium channels Kv1.1/KCNA1, Kv1.2/KCNA2, and Kv1.3/KCNA3. The protein is Potassium channel toxin TtrKIK of Tityus trivittatus (Argentinean scorpion).